The following is a 758-amino-acid chain: ATP-dependent RNA helicase dbp7 (758 aa).

2 disordered regions span residues 26–99 (GGTW…QPRQ) and 111–130 (PQKV…KPTN). Over residues 35 to 45 (AKKIAKHHAKG) the composition is skewed to basic residues. Polar residues predominate over residues 84–99 (GKQQSHTHPHSNQPRQ). The span at 111-127 (PQKVEEVKEEGHVEDAK) shows a compositional bias: basic and acidic residues. The Q motif motif lies at 138-167 (DTFTNLGLSPSLAAHLLTKLELKAPTAIQK). Residues 171–372 (SQLLKEEGDA…EISLKDAVHI (202 aa)) enclose the Helicase ATP-binding domain. Residue 184–191 (AETGSGKT) coordinates ATP. A DEAD box motif is present at residues 308 to 311 (DEGD). Residues 398–603 (QLKQSYAVVA…ALTRADANDI (206 aa)) enclose the Helicase C-terminal domain. Disordered stretches follow at residues 455–483 (KEDG…APAT) and 691–758 (VPGL…FNLA). Residues 696–709 (QGKEETKKDFKAER) are compositionally biased toward basic and acidic residues.

Belongs to the DEAD box helicase family. DDX31/DBP7 subfamily.

It localises to the nucleus. The protein resides in the nucleolus. The enzyme catalyses ATP + H2O = ADP + phosphate + H(+). Functionally, ATP-binding RNA helicase involved in the biogenesis of 60S ribosomal subunits and is required for the normal formation of 25S and 5.8S rRNAs. This chain is ATP-dependent RNA helicase dbp7 (dbp7), found in Neosartorya fischeri (strain ATCC 1020 / DSM 3700 / CBS 544.65 / FGSC A1164 / JCM 1740 / NRRL 181 / WB 181) (Aspergillus fischerianus).